Here is an 865-residue protein sequence, read N- to C-terminus: Armadillo repeat-containing protein 2 (865 aa).

Disordered stretches follow at residues 39-75 (TVRTQRPFTPREDQRKLFGPASSRTPENRPPSSFSVH) and 214-243 (SVPFHLRSGGDQGKRRPRASSSSRSPDQSR). Residues 60 to 75 (SSRTPENRPPSSFSVH) show a composition bias toward polar residues. ARM repeat units follow at residues 261 to 300 (IEVDEVFWNTRIVPILHDLEKEENIEMVCATCTQLHHALE), 303 to 343 (NMLG…ALKV), 362 to 402 (EKND…TIKF), 407 to 448 (PEFL…HLLV), 461 to 502 (PLAR…KLTS), 505 to 546 (DCCV…NLTA), 550 to 587 (QAREQFSKEKGSIPTLLSLFHTFYKLDLHSGKRWGEGD), 589 to 614 (RPEARRPAQAEDVLIKLTRVLANLAI), 617 to 660 (GVGP…NLSY), 662 to 703 (KVKN…NLSQ), 705 to 744 (HDICDFIVQKNVHKFMIALLDAKHQDICFSACGVLLNLTV), and 746 to 788 (RDKR…NFSE).

In terms of biological role, required for sperm flagellum axoneme organization and function. Involved in axonemal central pair complex assembly and/or stability. The chain is Armadillo repeat-containing protein 2 from Bos taurus (Bovine).